Reading from the N-terminus, the 465-residue chain is Serine carboxypeptidase-like 19 (465 aa).

Positions 1–23 are cleaved as a signal peptide; it reads MRNLSFIVLFLLTLFFIHHLVDA. 77–79 serves as a coordination point for substrate; it reads TGG. 3 cysteine pairs are disulfide-bonded: Cys-82–Cys-353, Cys-246–Cys-260, and Cys-284–Cys-320. A glycan (N-linked (GlcNAc...) asparagine) is linked at Asn-103. 177-179 contacts substrate; sequence DSY. The active site involves Ser-178. Residues 292–317 constitute a propeptide, linker peptide; sequence DTPNIRTDRRRVMKEFSVNDSSSLPP. Asn-310 and Asn-373 each carry an N-linked (GlcNAc...) asparagine glycan. The active site involves Asp-389. N-linked (GlcNAc...) asparagine glycosylation is present at Asn-405. 439–443 serves as a coordination point for substrate; sequence KGGGH. His-443 is a catalytic residue.

The protein belongs to the peptidase S10 family. Heterodimer. Post-translationally, N-glycosylated. As to expression, expressed in roots and flowers, and at lower levels in young leaves and seedlings. Expressed in mature seeds and detected in expanding siliques.

Its subcellular location is the secreted. It catalyses the reaction 1-O-(trans-sinapoyl)-beta-D-glucose + choline = O-sinapoylcholine + D-glucose. Its activity is regulated as follows. Slightly inhibited by phenylmethylsulfonyl fluoride (PMSF). Involved in plants secondary metabolism. Functions as acyltransferase to form the sinapate ester sinapoylcholine also known as sinapine. Able to convert in vitro benzoylglucose into benzoylcholine. This Arabidopsis thaliana (Mouse-ear cress) protein is Serine carboxypeptidase-like 19.